The sequence spans 373 residues: Tomoregulin-1 (373 aa).

A signal peptide spans 1–36 (MGAQAPLRLPAAPPLAVCGYTSVLLLFAFCLPGSGA). Residues 37–323 (SNQPAGGGGD…VPSRQKLTHV (287 aa)) lie on the Extracellular side of the membrane. N56 carries an N-linked (GlcNAc...) asparagine glycan. Residues 91–138 (ACQFQCHTNYIPVCGSNGDTYQNECFLRRAACKHQKDITVVARGPCYS) form the Kazal-like 1 domain. Intrachain disulfides connect C92/C122, C96/C115, and C104/C136. N140 carries N-linked (GlcNAc...) asparagine glycosylation. The segment at 140–162 (NGSGSGEGEEEGSGAGAHRKHSK) is disordered. The Kazal-like 2 domain maps to 182 to 230 (VCNIDCSGYSFNPVCASDGSSYNNPCFVREASCIRQEQIDIRHLGHCTD). Cystine bridges form between C183/C214, C187/C207, C196/C228, C268/C281, C276/C292, and C294/C303. The EGF-like domain maps to 264 to 304 (SHMPCPENLNGYCIHGKCEFIYSTQKASCRCESGYTGQHCE). A helical transmembrane segment spans residues 324–344 (LIAAIIGAVQIAIIVAIVMCI). Over 345 to 373 (TRKCPKNNRGRRQKQNLGHFTSETSSRMV) the chain is Cytoplasmic. A disordered region spans residues 352 to 373 (NRGRRQKQNLGHFTSETSSRMV). The span at 359–373 (QNLGHFTSETSSRMV) shows a compositional bias: polar residues.

Belongs to the tomoregulin family. As to quaternary structure, may interact with ST14.

The protein resides in the cell membrane. In terms of biological role, neuron-specific restriction factor that prevents herpes simplex virus 1 (HHV-1) infection in the brain by blocking viral entry. Also able to restrict herpes simplex virus 2 (HHV-2) infection, although to a lesser extent. Acts by preventing the association between the viral glycoprotein D (gD) and its cell surface receptor NECTIN1, thereby inhibiting fusion of the virus and the cell membrane. Also able to prevent the association between the viral glycoprotein B (gB) and MYH9/NMMHC-IIA and MYH10/NMMHC-IIB receptors. This is Tomoregulin-1 (Tmeff1) from Rattus norvegicus (Rat).